The sequence spans 123 residues: MIQMQTMLDAADNSGARSVMCIKVLGGSHRRYAHVGDIIKVTVKEAIPRGKVKKGDVLKAVVVRTRKGVRRPDGSVIRFDRNACVLLNNNSEQPIGTRIFGPVTRELRNAKFMKIVSLAPEVL.

Belongs to the universal ribosomal protein uL14 family. As to quaternary structure, part of the 50S ribosomal subunit. Forms a cluster with proteins L3 and L19. In the 70S ribosome, L14 and L19 interact and together make contacts with the 16S rRNA in bridges B5 and B8.

Its function is as follows. Binds to 23S rRNA. Forms part of two intersubunit bridges in the 70S ribosome. The sequence is that of Large ribosomal subunit protein uL14 from Vibrio cholerae serotype O1 (strain ATCC 39541 / Classical Ogawa 395 / O395).